The primary structure comprises 241 residues: Uridylate kinase (241 aa).

ATP is bound at residue 9-10 (GS). Glycine 44 lines the UMP pocket. The ATP site is built by glycine 45 and arginine 49. Residues aspartate 66 and 114-120 (IMPGQTT) each bind UMP. Residues threonine 140, tyrosine 146, and aspartate 149 each contribute to the ATP site.

The protein belongs to the UMP kinase family. In terms of assembly, homohexamer.

Its subcellular location is the cytoplasm. It carries out the reaction UMP + ATP = UDP + ADP. The protein operates within pyrimidine metabolism; CTP biosynthesis via de novo pathway; UDP from UMP (UMPK route): step 1/1. Its activity is regulated as follows. Inhibited by UTP. In terms of biological role, catalyzes the reversible phosphorylation of UMP to UDP. The protein is Uridylate kinase of Haloquadratum walsbyi (strain DSM 16790 / HBSQ001).